The sequence spans 127 residues: Aspartate 1-decarboxylase (127 aa).

Catalysis depends on S25, which acts as the Schiff-base intermediate with substrate; via pyruvic acid. S25 is modified (pyruvic acid (Ser)). T57 is a binding site for substrate. The Proton donor role is filled by Y58. A substrate-binding site is contributed by 73–75; the sequence is GAA.

It belongs to the PanD family. Heterooctamer of four alpha and four beta subunits. It depends on pyruvate as a cofactor. In terms of processing, is synthesized initially as an inactive proenzyme, which is activated by self-cleavage at a specific serine bond to produce a beta-subunit with a hydroxyl group at its C-terminus and an alpha-subunit with a pyruvoyl group at its N-terminus.

Its subcellular location is the cytoplasm. The catalysed reaction is L-aspartate + H(+) = beta-alanine + CO2. The protein operates within cofactor biosynthesis; (R)-pantothenate biosynthesis; beta-alanine from L-aspartate: step 1/1. Functionally, catalyzes the pyruvoyl-dependent decarboxylation of aspartate to produce beta-alanine. This chain is Aspartate 1-decarboxylase, found in Staphylococcus carnosus (strain TM300).